Consider the following 426-residue polypeptide: Glutamate-1-semialdehyde 2,1-aminomutase (426 aa).

The residue at position 265 (Lys-265) is an N6-(pyridoxal phosphate)lysine.

It belongs to the class-III pyridoxal-phosphate-dependent aminotransferase family. HemL subfamily. As to quaternary structure, homodimer. The cofactor is pyridoxal 5'-phosphate.

The protein localises to the cytoplasm. It catalyses the reaction (S)-4-amino-5-oxopentanoate = 5-aminolevulinate. It functions in the pathway porphyrin-containing compound metabolism; protoporphyrin-IX biosynthesis; 5-aminolevulinate from L-glutamyl-tRNA(Glu): step 2/2. The polypeptide is Glutamate-1-semialdehyde 2,1-aminomutase (Salmonella arizonae (strain ATCC BAA-731 / CDC346-86 / RSK2980)).